The sequence spans 718 residues: Origin of replication complex subunit 3 (718 aa).

Residues 26-43 (GAAASSSSSSAPSLPSSG) show a composition bias toward low complexity. Residues 26–75 (GAAASSSSSSAPSLPSSGRARRRIDVSGLASPNPKPGKRSRDDDAAEDDD) are disordered. A Nuclear localization signal motif is present at residues 659–666 (IKRKPHTS).

Belongs to the ORC3 family. As to quaternary structure, component of the origin recognition complex (ORC) composed of at least ORC1, ORC2, ORC3, ORC4, ORC5 and ORC6. ORC is regulated in a cell-cycle and development dependent manner. It is sequentially assembled at the exit from anaphase of mitosis and disassembled as cells enter S phase. As to expression, expressed at low levels in the shoot apical meristem (SAM), leaves, ears and roots (including root tips).

The protein resides in the nucleus. Component of the origin recognition complex (ORC) that binds origins of replication. DNA-binding is ATP-dependent. The specific DNA sequences that define origins of replication have not been identified yet. In Oryza sativa subsp. japonica (Rice), this protein is Origin of replication complex subunit 3.